Here is a 140-residue protein sequence, read N- to C-terminus: Transmembrane protein 107 (140 aa).

The next 2 membrane-spanning stretches (helical) occupy residues 7-27 (LVPS…TLFW) and 53-73 (LVAA…GFLS). Residue asparagine 79 is glycosylated (N-linked (GlcNAc...) asparagine). Helical transmembrane passes span 83 to 103 (SLLS…FIFE) and 113 to 133 (IFAF…IAVF).

Part of the tectonic-like complex (also named B9 complex). Interacts with TMEM237, TMEM231, MKS1 and TMEM216.

Its subcellular location is the membrane. The protein localises to the cell projection. It localises to the cilium. In terms of biological role, plays a role in cilia formation and embryonic patterning. Requires for normal Sonic hedgehog (Shh) signaling in the neural tube and acts in combination with GLI2 and GLI3 to pattern ventral and intermediate neuronal cell types. During ciliogenesis regulates the ciliary transition zone localization of some MKS complex proteins. The chain is Transmembrane protein 107 from Rattus norvegicus (Rat).